We begin with the raw amino-acid sequence, 968 residues long: MGDEYLAEPEDEVAISMWPENIGDKHQKQFKMEKLGKDQDALEDANFQQKPSSVDLNRLMELANSEKGVSQMQYFVKHWEYKRANTARLLKEQIGLLCQQRKEIEQRKQQILEEQQFQDESYYAVKRQVPILDEVYKDEWKRPSKKNDDLSHNQELKIDAEYDSISYWKERAMQLEKTLEASLQRERSLEEKLEENIKNLQSHTPVEEFSGMLKRADYFLHLVLQSAPIVIAHQDADLRYRFIFNHFPTLADEDVIGKTDYEILSGEGIEEMNNVKKEVMASGKATKREFVFNTPLFGAKTFVTYIEPVFSKSGETIGVNYVAMDITDQVTRREKMADIRVREAVQKAKETELSKSLHITEETMRAKQMLATMSHEIRSPLSGVLSMAEILATTKLDKEQYQLLEVMLSSGDLVLQLINDILDLSKVESGAMKLEATTFRPREVVKHVLQTAAASLKKELILEGCIGDNVPLEVTGDVLRIRQILTNLISNAVKFTHEGKVGINLHVLDKQLPGCRIEGGQLHSKAHSAPAAAAEHFSASPRKCDNDTLGCSNHEDACQTGIPSNDNFGEHHEGDEVVWLRCDVYDTGIGIPEKSLPLLFKRYMQASDDHARKYGGTGLGLAICKQLVELMGGTLTVVSKENEGSTFSFVLPCKIPVKEDHSDDPDDMPSSGGDFTTSDIEGSFIFKPQARPYLLTSGVSVMNNTKLIGGNQFYDPPNILEDRKPFSNGFVLAEDHSTNSASTAHQSNGPSVSRTNKEQHDNAMVIELNRQAERVSSSRGDTTSVSGLIHEERGPCRVHEEKSLHKKSKCSPSSNKAKILLVEDNKVNIMVAKSMLEQLGHGIDIVNNGLEAIRAIQKRQYDIILMDVHMPEMDGLQATKFIRSFENTGCWDTSVKPEHDQIIAGSDNLSDCAHMKKQGKRVPIIAMTANSFSESAEECLAAGMDSYISKPVNFQNIKECLQQYLPPQ.

2 coiled-coil regions span residues 89 to 120 and 169 to 204; these read LLKE…FQDE and KERA…QSHT. The 284-residue stretch at 372 to 655 folds into the Histidine kinase domain; sequence TMSHEIRSPL…TFSFVLPCKI (284 aa). His-375 carries the phosphohistidine; by autocatalysis modification. Residues 737-757 form a disordered region; the sequence is STNSASTAHQSNGPSVSRTNK. Polar residues predominate over residues 738–754; the sequence is TNSASTAHQSNGPSVSR. A Response regulatory domain is found at 818-965; sequence KILLVEDNKV…NIKECLQQYL (148 aa). Asp-867 is modified (4-aspartylphosphate).

In terms of processing, activation probably requires a transfer of a phosphate group between a His in the transmitter domain and an Asp of the receiver domain.

The enzyme catalyses ATP + protein L-histidine = ADP + protein N-phospho-L-histidine.. Its function is as follows. Cytokinin receptor related to bacterial two-component regulators. Functions as a histidine kinase and transmits the stress signal to a downstream MAPK cascade. This chain is Probable histidine kinase 1, found in Oryza sativa subsp. indica (Rice).